A 138-amino-acid chain; its full sequence is Transcription factor Atoh7-a (138 aa).

A bHLH domain is found at 33 to 85; the sequence is KRRLAANARERRRMQGLNTAFDSLRKVVPQWGEDKQLSKYETLQMALSYIMAL.

Its subcellular location is the nucleus. The protein resides in the perikaryon. The protein localises to the cell projection. It is found in the axon. Functionally, transcription factor that binds to DNA at the consensus sequence 5'-CAG[GC]TG-3'. Positively regulates the determination of retinal ganglion cell fate and formation of the optic nerve and retino-hypothalamic tract. Required for retinal circadian rhythm photoentrainment. Plays a role in brainstem auditory signaling and binaural processing. Regulates the differentiation of olfactory receptor neurons. During retinal neurogenesis, activates the transcription of several genes such as brn3d, coe3, cbfa2t2, glis2, elrC and xgadd45-gamma. The chain is Transcription factor Atoh7-a from Xenopus laevis (African clawed frog).